The primary structure comprises 162 residues: 3-dehydroquinate dehydratase (162 aa).

Tyr22 serves as the catalytic Proton acceptor. Substrate-binding residues include Asn73, His79, and Asp86. His99 functions as the Proton donor in the catalytic mechanism. Substrate-binding positions include Leu100–Ser101 and Arg110.

This sequence belongs to the type-II 3-dehydroquinase family. Homododecamer.

The catalysed reaction is 3-dehydroquinate = 3-dehydroshikimate + H2O. It functions in the pathway metabolic intermediate biosynthesis; chorismate biosynthesis; chorismate from D-erythrose 4-phosphate and phosphoenolpyruvate: step 3/7. Catalyzes a trans-dehydration via an enolate intermediate. This chain is 3-dehydroquinate dehydratase, found in Sulfurovum sp. (strain NBC37-1).